Consider the following 326-residue polypeptide: Polyprenal reductase (326 aa).

5 helical membrane passes run 26 to 46 (MMFG…TFVE), 84 to 104 (HFYT…VSTV), 167 to 187 (INLS…IALL), 212 to 232 (ILYL…NMIL), and 256 to 276 (LFNL…FCIA).

The protein belongs to the steroid 5-alpha reductase family. Polyprenal reductase subfamily.

Its subcellular location is the endoplasmic reticulum membrane. The catalysed reaction is a di-trans,poly-cis-dolichal + NADP(+) = a di-trans,poly-cis-polyprenal + NADPH + H(+). It functions in the pathway protein modification; protein glycosylation. Its function is as follows. Plays a key role in early steps of protein N-linked glycosylation by being involved in the conversion of polyprenol into dolichol. Acts as a polyprenal reductase that mediates the reduction of polyprenal into dolichal in a NADP-dependent mechanism. Dolichols are required for the synthesis of dolichol-linked monosaccharides and the oligosaccharide precursor used for N-glycosylation. The polypeptide is Polyprenal reductase (Drosophila melanogaster (Fruit fly)).